The chain runs to 115 residues: UPF0597 protein NTHI1023 (115 aa).

This sequence belongs to the UPF0597 family.

The sequence is that of UPF0597 protein NTHI1023 from Haemophilus influenzae (strain 86-028NP).